A 593-amino-acid polypeptide reads, in one-letter code: Isocitrate dehydrogenase kinase/phosphatase (593 aa).

ATP is bound by residues 315–321 (APGIRGM) and Lys-336. Residue Asp-371 is part of the active site.

The protein belongs to the AceK family.

Its subcellular location is the cytoplasm. The enzyme catalyses L-seryl-[isocitrate dehydrogenase] + ATP = O-phospho-L-seryl-[isocitrate dehydrogenase] + ADP + H(+). In terms of biological role, bifunctional enzyme which can phosphorylate or dephosphorylate isocitrate dehydrogenase (IDH) on a specific serine residue. This is a regulatory mechanism which enables bacteria to bypass the Krebs cycle via the glyoxylate shunt in response to the source of carbon. When bacteria are grown on glucose, IDH is fully active and unphosphorylated, but when grown on acetate or ethanol, the activity of IDH declines drastically concomitant with its phosphorylation. The polypeptide is Isocitrate dehydrogenase kinase/phosphatase (Salmonella typhi).